The following is a 60-amino-acid chain: Mastoparan-VT6 (60 aa).

An N-terminal signal peptide occupies residues 1–27 (MKNTILILFTAFIALLGFFGMSAEALA). AXPX repeat units lie at residues 27 to 30 (ADPK), 31 to 34 (ADPL), 35 to 38 (AGPN), and 41 to 44 (ADPE). A propeptide spanning residues 28–45 (DPKADPLAGPNPDADPEA) is cleaved from the precursor. Leucine amide is present on Leu-59.

Belongs to the MCD family. Mastoparan subfamily. Expressed by the venom gland.

Its subcellular location is the secreted. Functionally, the synthetic peptide shows antimicrobial activities against Gram-negative bacteria (but not against all strains tested), Gram-positive bacteria (all strains tested) and the fungi C.albicans and C.parapsilosis. Exhibits little hemolytic activity against washed human erythrocytes. In Vespa tropica (Greater banded hornet), this protein is Mastoparan-VT6.